The chain runs to 263 residues: P29 (263 aa).

Basic and acidic residues predominate over residues 30–39 (VPEGLRDISK). The tract at residues 30–93 (VPEGLRDISK…PKQKQLAPPI (64 aa)) is disordered. Polar residues predominate over residues 52 to 64 (LSRASARPQQLQP).

The chain is P29 (p29) from Citrus sinensis (Sweet orange).